We begin with the raw amino-acid sequence, 215 residues long: Kinetochore protein Spc25 (215 aa).

Positions 43-114 (DNLLTAMEKA…MECIHALKRA (72 aa)) form a coiled coil.

This sequence belongs to the SPC25 family. Component of the Ndc80 complex, which is composed of Ndc80, Nuf2 and Spc25.

The protein localises to the nucleus. It localises to the chromosome. The protein resides in the centromere. It is found in the kinetochore. In terms of biological role, acts as a component of the essential kinetochore-associated Ndc80 complex, which is required for chromosome segregation and spindle checkpoint activity during meiosis and mitosis. Required for kinetochore integrity and the organization of stable microtubule binding sites in the outer plate of the kinetochore. Participates in SAC signaling that responds specifically to disruptions in spindle microtubule dynamics. The NDC80 complex synergistically enhances the affinity of the SKA1 complex for microtubules and may allow the NDC80 complex to track depolymerizing microtubules. This Drosophila ananassae (Fruit fly) protein is Kinetochore protein Spc25.